A 223-amino-acid polypeptide reads, in one-letter code: N-(5'-phosphoribosyl)anthranilate isomerase (223 aa).

Belongs to the TrpF family.

The enzyme catalyses N-(5-phospho-beta-D-ribosyl)anthranilate = 1-(2-carboxyphenylamino)-1-deoxy-D-ribulose 5-phosphate. It functions in the pathway amino-acid biosynthesis; L-tryptophan biosynthesis; L-tryptophan from chorismate: step 3/5. This Moorella thermoacetica (strain ATCC 39073 / JCM 9320) protein is N-(5'-phosphoribosyl)anthranilate isomerase.